The primary structure comprises 193 residues: Putative nucleotidase YqfW (193 aa).

The protein belongs to the 5'(3')-deoxyribonucleotidase family.

In Bacillus subtilis (strain 168), this protein is Putative nucleotidase YqfW (yqfW).